The primary structure comprises 354 residues: Thiamine thiazole synthase 1, chloroplastic (354 aa).

Residues Met-1–Ser-43 constitute a chloroplast transit peptide. Residues Ala-96, Glu-116–Gln-117, Gly-124, and Val-190 each bind substrate. Cys-219 carries the post-translational modification 2,3-didehydroalanine (Cys). Substrate contacts are provided by residues Asp-221, His-236, Met-288, and Arg-298–Gly-300.

Belongs to the THI4 family. In terms of assembly, homooctamer. Fe cation serves as cofactor. During the catalytic reaction, a sulfide is transferred from Cys-219 to a reaction intermediate, generating a dehydroalanine residue.

Its subcellular location is the plastid. The protein resides in the chloroplast. It catalyses the reaction [ADP-thiazole synthase]-L-cysteine + glycine + NAD(+) = [ADP-thiazole synthase]-dehydroalanine + ADP-5-ethyl-4-methylthiazole-2-carboxylate + nicotinamide + 3 H2O + 2 H(+). Functionally, involved in biosynthesis of the thiamine precursor thiazole. Catalyzes the conversion of NAD and glycine to adenosine diphosphate 5-(2-hydroxyethyl)-4-methylthiazole-2-carboxylic acid (ADT), an adenylated thiazole intermediate. The reaction includes an iron-dependent sulfide transfer from a conserved cysteine residue of the protein to a thiazole intermediate. The enzyme can only undergo a single turnover, which suggests it is a suicide enzyme. May have additional roles in adaptation to various stress conditions and in DNA damage tolerance. This is Thiamine thiazole synthase 1, chloroplastic from Sorghum bicolor (Sorghum).